Consider the following 434-residue polypeptide: L-2-hydroxyglutarate dehydrogenase, mitochondrial (434 aa).

The protein belongs to the L2HGDH family. Requires FAD as cofactor.

It is found in the mitochondrion. The catalysed reaction is (S)-2-hydroxyglutarate + A = 2-oxoglutarate + AH2. This Caenorhabditis briggsae protein is L-2-hydroxyglutarate dehydrogenase, mitochondrial.